Reading from the N-terminus, the 95-residue chain is Probable FAD-linked sulfhydryl oxidase OPG072 (95 aa).

Residues 1-8 (MNPKHWGR) lie on the Intravirion side of the membrane. The ERV/ALR sulfhydryl oxidase domain occupies 1 to 95 (MNPKHWGRAV…AIDVSKVKPL (95 aa)). A helical membrane pass occupies residues 9 to 25 (AVWTIIFIVLSQAGLDG). The Virion surface portion of the chain corresponds to 26-95 (NIEACKRKLY…AIDVSKVKPL (70 aa)). Cys-43 and Cys-46 form a disulfide bridge.

It belongs to the orthopoxvirus OPG072 family. In terms of assembly, interacts with OPG128; this interaction involves formation of a transient disulfide-bonded intermediate, allowing disulfide bond transfer. FAD serves as cofactor.

The protein resides in the virion membrane. It localises to the host cytoplasm. The enzyme catalyses 2 R'C(R)SH + O2 = R'C(R)S-S(R)CR' + H2O2. FAD-dependent sulfhydryl oxidase that catalyzes disulfide bond formation. The complete pathway for formation of disulfide bonds in intracellular virion membrane proteins sequentially involves thiol-disulfide transfer between OPG072, OPG128 and OPG088. This is Probable FAD-linked sulfhydryl oxidase OPG072 (OPG072) from Monkeypox virus.